The chain runs to 199 residues: Probable GTP-binding protein EngB (199 aa).

Residues 22 to 196 (NWPEFAFSGR…GKFILDLVDS (175 aa)) enclose the EngB-type G domain. GTP-binding positions include 30–37 (GRSNVGKS), 57–61 (GRTQS), 75–78 (DLPG), 142–145 (TKVD), and 175–177 (FSA). 2 residues coordinate Mg(2+): Ser37 and Thr59.

This sequence belongs to the TRAFAC class TrmE-Era-EngA-EngB-Septin-like GTPase superfamily. EngB GTPase family. Mg(2+) is required as a cofactor.

Necessary for normal cell division and for the maintenance of normal septation. This is Probable GTP-binding protein EngB from Halothermothrix orenii (strain H 168 / OCM 544 / DSM 9562).